Here is a 367-residue protein sequence, read N- to C-terminus: o-succinylbenzoate synthase (367 aa).

Catalysis depends on Lys-164, which acts as the Proton donor. 3 residues coordinate Mg(2+): Asp-189, Glu-214, and Asp-239. Lys-263 functions as the Proton acceptor in the catalytic mechanism.

It belongs to the mandelate racemase/muconate lactonizing enzyme family. MenC type 2 subfamily. As to quaternary structure, homodimer. Requires a divalent metal cation as cofactor.

The catalysed reaction is (1R,6R)-6-hydroxy-2-succinyl-cyclohexa-2,4-diene-1-carboxylate = 2-succinylbenzoate + H2O. It participates in quinol/quinone metabolism; 1,4-dihydroxy-2-naphthoate biosynthesis; 1,4-dihydroxy-2-naphthoate from chorismate: step 4/7. The protein operates within quinol/quinone metabolism; menaquinone biosynthesis. Functionally, converts 2-succinyl-6-hydroxy-2,4-cyclohexadiene-1-carboxylate (SHCHC) to 2-succinylbenzoate (OSB). Also acts as a N-succinylamino acid racemase (NSAR) that catalyzes the racemization of N-succinyl-L-phenylglycine. Since the gene is encoded in a menaquinone synthesis operon, OSB synthase is probably the physiological activity. A pathway that requires NSAR activity has not been identified in this species, so whether NSAR is also a biological activity is unknown. The sequence is that of o-succinylbenzoate synthase from Enterococcus faecalis (strain ATCC 700802 / V583).